The primary structure comprises 186 residues: dTTP/UTP pyrophosphatase (186 aa).

The active-site Proton acceptor is Asp70.

This sequence belongs to the Maf family. YhdE subfamily. A divalent metal cation is required as a cofactor.

It is found in the cytoplasm. The catalysed reaction is dTTP + H2O = dTMP + diphosphate + H(+). It carries out the reaction UTP + H2O = UMP + diphosphate + H(+). Nucleoside triphosphate pyrophosphatase that hydrolyzes dTTP and UTP. May have a dual role in cell division arrest and in preventing the incorporation of modified nucleotides into cellular nucleic acids. The polypeptide is dTTP/UTP pyrophosphatase (Vibrio vulnificus (strain CMCP6)).